Consider the following 85-residue polypeptide: Serine protease inhibitor Kazal-type 7 (85 aa).

The signal sequence occupies residues 1–19; it reads MKITGGLLLLCTVVYFCSS. One can recognise a Kazal-like domain in the interval 26–85; that stretch reads SPKKVDCSIYKKYPVVAIPCPITYLPVCGSDYITYGNECHLCTESLKSNGRVQFLHDGSC. 3 cysteine pairs are disulfide-bonded: C32–C67, C45–C64, and C53–C85.

It localises to the secreted. Its function is as follows. Probable serine protease inhibitor. The sequence is that of Serine protease inhibitor Kazal-type 7 (SPINK7) from Homo sapiens (Human).